Reading from the N-terminus, the 538-residue chain is Non-specific phospholipase C4 (538 aa).

Positions 91 to 112 (KPWDSGKPDPNPGHPNMSGFAQ) are disordered.

Belongs to the bacterial phospholipase C family. Expressed in root tips, cotyledons, on leaf margins, stems, young anthers and funiculus.

It is found in the cell membrane. It catalyses the reaction a 1,2-diacyl-sn-glycero-3-phosphocholine + H2O = phosphocholine + a 1,2-diacyl-sn-glycerol + H(+). Non-specific phospholipase C (PLC) which assumes major PLC activity during inorganic phosphate starvation. Substrate preference is phosphatidylcholine (PC), but can also hydrolyze phosphatidylethanolamine (PE) with lower efficiency. Has no activity toward phosphatidic acid (PA). Plays an important role in the supply of both inorganic phosphate and diacylglycerol from membrane-localized phospholipids during phosphate deprivation. May be required for lipid-derived signaling molecules that positively modulate abscisic acid (ABA) response and promote plant tolerance to drought and salt stresses. May be involved in brassinolide-mediated signaling in root development. This is Non-specific phospholipase C4 (NPC4) from Arabidopsis thaliana (Mouse-ear cress).